Reading from the N-terminus, the 90-residue chain is MARTVHCIKLGKEAEGLDFAPYPGDLGKRIYDNVSKQAWADWIKHQTMLVNENRLNLADARARQYLARQMENHFFGSGADAAAGYVPPSA.

The protein belongs to the Fe(2+)-trafficking protein family.

Functionally, could be a mediator in iron transactions between iron acquisition and iron-requiring processes, such as synthesis and/or repair of Fe-S clusters in biosynthetic enzymes. The polypeptide is Probable Fe(2+)-trafficking protein (Acidovorax ebreus (strain TPSY) (Diaphorobacter sp. (strain TPSY))).